The following is a 264-amino-acid chain: NAD-capped RNA hydrolase NudC (264 aa).

Residue arginine 70 participates in substrate binding. Residues cysteine 99 and cysteine 102 each contribute to the Zn(2+) site. A substrate-binding site is contributed by glutamate 112. Zn(2+) is bound by residues cysteine 117 and cysteine 122. Tyrosine 127 serves as a coordination point for substrate. One can recognise a Nudix hydrolase domain in the interval 128–257 (PVICPSIIVA…TIALKLINAT (130 aa)). A divalent metal cation is bound by residues alanine 166, glutamate 182, and glutamate 186. Residues 167 to 188 (GFVEIGESFEQTVEREVFEETG) carry the Nudix box motif. 200–207 (QPWAFPNS) is a binding site for substrate. A divalent metal cation is bound at residue glutamate 227. Alanine 250 is a binding site for substrate.

The protein belongs to the Nudix hydrolase family. NudC subfamily. Homodimer. Requires Mg(2+) as cofactor. Mn(2+) serves as cofactor. Zn(2+) is required as a cofactor.

The enzyme catalyses a 5'-end NAD(+)-phospho-ribonucleoside in mRNA + H2O = a 5'-end phospho-adenosine-phospho-ribonucleoside in mRNA + beta-nicotinamide D-ribonucleotide + 2 H(+). It carries out the reaction NAD(+) + H2O = beta-nicotinamide D-ribonucleotide + AMP + 2 H(+). The catalysed reaction is NADH + H2O = reduced beta-nicotinamide D-ribonucleotide + AMP + 2 H(+). Functionally, mRNA decapping enzyme that specifically removes the nicotinamide adenine dinucleotide (NAD) cap from a subset of mRNAs by hydrolyzing the diphosphate linkage to produce nicotinamide mononucleotide (NMN) and 5' monophosphate mRNA. The NAD-cap is present at the 5'-end of some mRNAs and stabilizes RNA against 5'-processing. Has preference for mRNAs with a 5'-end purine. Catalyzes the hydrolysis of a broad range of dinucleotide pyrophosphates. The sequence is that of NAD-capped RNA hydrolase NudC from Actinobacillus succinogenes (strain ATCC 55618 / DSM 22257 / CCUG 43843 / 130Z).